A 343-amino-acid chain; its full sequence is GTPase Obg (343 aa).

The Obg domain occupies 1–159 (MKFIDEVKIQ…FELRLELRVL (159 aa)). In terms of domain architecture, OBG-type G spans 160-334 (ADVGLLGLPN…LIYAIMGHLQ (175 aa)). Residues 166-173 (GLPNAGKS), 191-195 (FTTLY), 213-216 (DIPG), 284-287 (NKVD), and 315-317 (SAL) contribute to the GTP site. Residues serine 173 and threonine 193 each coordinate Mg(2+).

Belongs to the TRAFAC class OBG-HflX-like GTPase superfamily. OBG GTPase family. In terms of assembly, monomer. The cofactor is Mg(2+).

It localises to the cytoplasm. Its function is as follows. An essential GTPase which binds GTP, GDP and possibly (p)ppGpp with moderate affinity, with high nucleotide exchange rates and a fairly low GTP hydrolysis rate. Plays a role in control of the cell cycle, stress response, ribosome biogenesis and in those bacteria that undergo differentiation, in morphogenesis control. The chain is GTPase Obg from Nitrosomonas europaea (strain ATCC 19718 / CIP 103999 / KCTC 2705 / NBRC 14298).